The primary structure comprises 357 residues: MSELNALLKDINGSLTATSESLERLSGIYSNSATDEIPESNQLHEHLFYDAKKPAEKVSLLSLKNGSMLGYINSLLMLIGNRLDDECKDPSAMDARERSIQHRVVLERGVKPLEKKLAYQLDKLTRAYVKMEKEYKDAEKRALEKSTLVNHSGNDDSEDDESSEDEIAYRPNTSGIINTNKKSSAYRVEETAKQENGEENDDNETGVYKPPKITAVLPPQQTHFEDRFDAREHKDRSNKSRMQAMEEYIRESSDQPDWSASIGADIVNHGRGGIKSLRDTEKERRVTSFEEDNFTRLNITNKAEKRKQKQRERNARMNVIGGEDFGIFSSKRKLEDSTSRRGAKKTRSAWDRAQRRL.

N-acetylserine is present on serine 2. Disordered regions lie at residues 146-211 and 301-357; these read STLV…YKPP and NKAE…QRRL. Positions 155–166 are enriched in acidic residues; that stretch reads DDSEDDESSEDE. Residues 171-183 are compositionally biased toward polar residues; that stretch reads PNTSGIINTNKKS. Basic and acidic residues-rich tracts occupy residues 187–196 and 348–357; these read RVEETAKQEN and SAWDRAQRRL.

It is found in the nucleus. The protein resides in the nucleolus. Component of the U3 small nucleolar ribonucleoprotein. Required for the early cleavages at sites A0, A1 and A2 of the pre-ribosomal RNA. Participates in ribosome biogenesis. This Saccharomyces cerevisiae (strain ATCC 204508 / S288c) (Baker's yeast) protein is U3 small nucleolar ribonucleoprotein protein LCP5 (LCP5).